We begin with the raw amino-acid sequence, 396 residues long: tRNA-specific 2-thiouridylase MnmA (396 aa).

Residues 11–18 and M37 each bind ATP; that span reads GLSGGVDS. The tract at residues 97 to 99 is interaction with target base in tRNA; sequence NPD. Residue C102 is the Nucleophile of the active site. Cysteines 102 and 225 form a disulfide. G126 contacts ATP. The segment at 175–177 is interaction with tRNA; it reads KDQ. C225 functions as the Cysteine persulfide intermediate in the catalytic mechanism. The interaction with tRNA stretch occupies residues 343 to 344; sequence RY.

It belongs to the MnmA/TRMU family.

Its subcellular location is the cytoplasm. The enzyme catalyses S-sulfanyl-L-cysteinyl-[protein] + uridine(34) in tRNA + AH2 + ATP = 2-thiouridine(34) in tRNA + L-cysteinyl-[protein] + A + AMP + diphosphate + H(+). Its function is as follows. Catalyzes the 2-thiolation of uridine at the wobble position (U34) of tRNA, leading to the formation of s(2)U34. The chain is tRNA-specific 2-thiouridylase MnmA from Methylibium petroleiphilum (strain ATCC BAA-1232 / LMG 22953 / PM1).